Here is a 736-residue protein sequence, read N- to C-terminus: Capsid protein (736 aa).

A disordered region spans residues 633 to 692; sequence ESDALTLSPVHRPKRPKRDTQVKEKTPEKDSDSAVQLRRLQPWIHSSQETKDEEEEIPEG. The segment covering 650 to 664 has biased composition (basic and acidic residues); it reads RDTQVKEKTPEKDSD.

Belongs to the anelloviridae capsid protein family.

It localises to the virion. Functionally, self assemble to form an icosahedral capsid. In Torque teno virus (isolate Human/Finland/Hel32/2002) (TTV), this protein is Capsid protein.